A 205-amino-acid chain; its full sequence is Holliday junction branch migration complex subunit RuvA (205 aa).

A domain I region spans residues 1-64 (MIGKLRGLID…EDQIKLFGFR (64 aa)). The segment at 65 to 143 (SDVEREWFRL…AFANVDPGVV (79 aa)) is domain II. The flexible linker stretch occupies residues 144–154 (RLSGAIEESRA). The segment at 154–205 (APQPVADAISALINLGYGQPQAAAAIAAASRAAGDKAETAQLIRLGLKELAK) is domain III.

It belongs to the RuvA family. Homotetramer. Forms an RuvA(8)-RuvB(12)-Holliday junction (HJ) complex. HJ DNA is sandwiched between 2 RuvA tetramers; dsDNA enters through RuvA and exits via RuvB. An RuvB hexamer assembles on each DNA strand where it exits the tetramer. Each RuvB hexamer is contacted by two RuvA subunits (via domain III) on 2 adjacent RuvB subunits; this complex drives branch migration. In the full resolvosome a probable DNA-RuvA(4)-RuvB(12)-RuvC(2) complex forms which resolves the HJ.

It is found in the cytoplasm. In terms of biological role, the RuvA-RuvB-RuvC complex processes Holliday junction (HJ) DNA during genetic recombination and DNA repair, while the RuvA-RuvB complex plays an important role in the rescue of blocked DNA replication forks via replication fork reversal (RFR). RuvA specifically binds to HJ cruciform DNA, conferring on it an open structure. The RuvB hexamer acts as an ATP-dependent pump, pulling dsDNA into and through the RuvAB complex. HJ branch migration allows RuvC to scan DNA until it finds its consensus sequence, where it cleaves and resolves the cruciform DNA. This chain is Holliday junction branch migration complex subunit RuvA, found in Bradyrhizobium sp. (strain ORS 278).